The sequence spans 474 residues: tRNA-2-methylthio-N(6)-dimethylallyladenosine synthase (474 aa).

In terms of domain architecture, MTTase N-terminal spans 3–120 (KKLHIKTWGC…LPEMINQVKG (118 aa)). 6 residues coordinate [4Fe-4S] cluster: Cys12, Cys49, Cys83, Cys157, Cys161, and Cys164. The Radical SAM core domain occupies 143–375 (RAEGPTAFVS…QERINQQAMA (233 aa)). The region spanning 378 to 441 (RRMLGTTQRI…PNSLRGKVIR (64 aa)) is the TRAM domain.

The protein belongs to the methylthiotransferase family. MiaB subfamily. Monomer. The cofactor is [4Fe-4S] cluster.

The protein localises to the cytoplasm. The enzyme catalyses N(6)-dimethylallyladenosine(37) in tRNA + (sulfur carrier)-SH + AH2 + 2 S-adenosyl-L-methionine = 2-methylsulfanyl-N(6)-dimethylallyladenosine(37) in tRNA + (sulfur carrier)-H + 5'-deoxyadenosine + L-methionine + A + S-adenosyl-L-homocysteine + 2 H(+). Functionally, catalyzes the methylthiolation of N6-(dimethylallyl)adenosine (i(6)A), leading to the formation of 2-methylthio-N6-(dimethylallyl)adenosine (ms(2)i(6)A) at position 37 in tRNAs that read codons beginning with uridine. The protein is tRNA-2-methylthio-N(6)-dimethylallyladenosine synthase of Cronobacter sakazakii (strain ATCC BAA-894) (Enterobacter sakazakii).